The chain runs to 307 residues: UDP-3-O-acyl-N-acetylglucosamine deacetylase (307 aa).

3 residues coordinate Zn(2+): His-79, His-239, and Asp-243. The Proton donor role is filled by His-266.

It belongs to the LpxC family. Zn(2+) serves as cofactor.

It carries out the reaction a UDP-3-O-[(3R)-3-hydroxyacyl]-N-acetyl-alpha-D-glucosamine + H2O = a UDP-3-O-[(3R)-3-hydroxyacyl]-alpha-D-glucosamine + acetate. Its pathway is glycolipid biosynthesis; lipid IV(A) biosynthesis; lipid IV(A) from (3R)-3-hydroxytetradecanoyl-[acyl-carrier-protein] and UDP-N-acetyl-alpha-D-glucosamine: step 2/6. Its function is as follows. Catalyzes the hydrolysis of UDP-3-O-myristoyl-N-acetylglucosamine to form UDP-3-O-myristoylglucosamine and acetate, the committed step in lipid A biosynthesis. In Tolumonas auensis (strain DSM 9187 / NBRC 110442 / TA 4), this protein is UDP-3-O-acyl-N-acetylglucosamine deacetylase.